A 131-amino-acid chain; its full sequence is uncharacterized protein (131 aa).

The next 2 helical transmembrane spans lie at 61–81 (LLLL…YLPI) and 102–122 (VCSI…ALRY).

Its subcellular location is the membrane. This is an uncharacterized protein from Saccharomyces cerevisiae (strain ATCC 204508 / S288c) (Baker's yeast).